The following is a 402-amino-acid chain: MGLGQGWGWEASCFACLIRSCCQVVTFTFPFGFQGISQSLENVSGYYADARLEVGSTQLRTAGSCSHSFKRSFLEKKRFTEEATKYFRERVSPVHLQILLTNNEAWKRFVTAAELPRDEADALYEALKKLRTYAAIEDEYVQQKDEQFREWFLKEFPQVKRKIQESIEKLRALANGIEEVHRGCTISNVVSSSTGAASGIMSLAGLVLAPFTAGTSLALTAAGVGLGAASAVTGITTSIVEHSYTSSAEAEASRLTATSIDRLKVFKEVMRDITPNLLSLLNNYYEATQTIGSEIRAIRQARARARLPVTTWRISAGSGGQAERTIAGTTRAVSRGARILSATTSGIFLALDVVNLVYESKHLHEGAKSASAEELRRQAQELEENLMELTQIYQRLNPCHTH.

It belongs to the apolipoprotein L family. As to expression, widely expressed; the highest levels are in prostate, lung and placenta; also detected in kidney, bone marrow, spleen, thymus, spinal cord, adrenal gland, salivary gland, trachea and mammary gland; levels are low in brain, heart, fetal liver, pancreas and testis.

It is found in the cytoplasm. Functionally, may affect the movement of lipids in the cytoplasm or allow the binding of lipids to organelles. This Homo sapiens (Human) protein is Apolipoprotein L3 (APOL3).